Here is a 343-residue protein sequence, read N- to C-terminus: LRP2-binding protein (343 aa).

One copy of the TPR repeat lies at 58 to 91; it reads SQATFLLGQLHYVQGCYAEAELIFDRIKDKDPQA. 6 Sel1-like repeats span residues 92 to 124, 132 to 167, 172 to 205, 206 to 241, 242 to 273, and 293 to 328; these read LYQL…FWDS, YAAL…DNGN, VKAQ…GNGS, LESQ…ERGS, VYAQ…EYKD, and AIGM…RIDP.

Its subcellular location is the cytoplasm. May act as an adapter that regulates LRP2 function. The sequence is that of LRP2-binding protein (lrp2bp) from Danio rerio (Zebrafish).